Reading from the N-terminus, the 72-residue chain is U1-sicaritoxin-Sdo1a (72 aa).

An N-terminal signal peptide occupies residues 1-24 (MMKKFTCFLLCATILCAIFCVSVA). A propeptide spanning residues 25 to 41 (EKFHKMKSDIERDETPM) is cleaved from the precursor. Cystine bridges form between Cys-43–Cys-61, Cys-50–Cys-64, and Cys-60–Cys-69.

Expressed by the venom gland.

The protein resides in the secreted. This is U1-sicaritoxin-Sdo1a from Hexophthalma dolichocephala (Afrotropical spider).